The following is a 390-amino-acid chain: GDSL esterase/lipase At1g28580 (390 aa).

A signal peptide spans 1–28; it reads MAYPGSPILMKLLVFIFLSTFVVTNVSS. Ser-44 serves as the catalytic Nucleophile. Asn-140 and Asn-322 each carry an N-linked (GlcNAc...) asparagine glycan. Residues Asp-347 and His-350 contribute to the active site.

Belongs to the 'GDSL' lipolytic enzyme family.

It is found in the secreted. The polypeptide is GDSL esterase/lipase At1g28580 (Arabidopsis thaliana (Mouse-ear cress)).